The sequence spans 63 residues: Sperm protamine P1 (63 aa).

The tract at residues 1-47 is disordered; it reads MARCRRHIRSRSRSRNQCQRRRRRSHYNRRRTYRRSRRHSRRRRVRR.

The protein belongs to the protamine P1 family. In terms of tissue distribution, testis.

It is found in the nucleus. The protein localises to the chromosome. In terms of biological role, protamines substitute for histones in the chromatin of sperm during the haploid phase of spermatogenesis. They compact sperm DNA into a highly condensed, stable and inactive complex. This is Sperm protamine P1 (PRM1) from Planigale tenuirostris (Narrow-nosed planigale).